The primary structure comprises 153 residues: Putative nuclear shuttle protein (153 aa).

This sequence belongs to the nanoviridae nuclear shuttle protein family.

Its subcellular location is the host nucleus. The protein resides in the host cytoplasm. In terms of biological role, putative nuclear shuttle protein. This is Putative nuclear shuttle protein (DNA-N) from Trifolium subterraneum (Subterranean clover).